The following is a 182-amino-acid chain: uncharacterized protein (182 aa).

It localises to the mitochondrion. This is an uncharacterized protein from Schizosaccharomyces pombe (strain 972 / ATCC 24843) (Fission yeast).